The primary structure comprises 143 residues: Mediator of RNA polymerase II transcription subunit 21 (143 aa).

The stretch at 53-130 (KEFEKNIDEL…KVRTLTQDFT (78 aa)) forms a coiled coil.

Belongs to the Mediator complex subunit 21 family. As to quaternary structure, component of the Mediator complex.

The protein resides in the nucleus. Functionally, component of the Mediator complex, a coactivator involved in the regulated transcription of nearly all RNA polymerase II-dependent genes. Mediator functions as a bridge to convey information from gene-specific regulatory proteins to the basal RNA polymerase II transcription machinery. Mediator is recruited to promoters by direct interactions with regulatory proteins and serves as a scaffold for the assembly of a functional preinitiation complex with RNA polymerase II and the general transcription factors. The protein is Mediator of RNA polymerase II transcription subunit 21 (SRB7) of Kluyveromyces lactis (strain ATCC 8585 / CBS 2359 / DSM 70799 / NBRC 1267 / NRRL Y-1140 / WM37) (Yeast).